Reading from the N-terminus, the 454-residue chain is LETM1 domain-containing protein YLH47, mitochondrial (454 aa).

The N-terminal 45 residues, 1-45, are a transit peptide targeting the mitochondrion; the sequence is MLKYRSLPIKRAIHHPAPGITPISPRIMVSRLRVIPSFNLKFNRW. The Mitochondrial intermembrane segment spans residues 46–136; the sequence is NSSVPESSKK…LKRTTQDIVR (91 aa). The tract at residues 51–73 is disordered; the sequence is ESSKKELKTTDGNQESASKVSPV. A helical membrane pass occupies residues 137–157; that stretch reads LVPFAAFLIIPFAELLLPFAL. Residues 158–454 lie on the Mitochondrial matrix side of the membrane; the sequence is KLFPNLLPST…IGEAAAIKEK (297 aa). Positions 177 to 371 constitute a Letm1 RBD domain; sequence KLENLRNTRK…LCDVLIGIPD (195 aa). A coiled-coil region spans residues 376–423; it reads EVKVNVVKEDEASAKQKLKQLREQEEIMKEEEQQEENAIVSVKDELSL. 2 stretches are compositionally biased toward basic and acidic residues: residues 420–430 and 437–454; these read ELSLDDQDKNI and VKPHDTKPIGEAAAIKEK. Residues 420 to 454 form a disordered region; that stretch reads ELSLDDQDKNIDAAAPDVKPHDTKPIGEAAAIKEK.

As to quaternary structure, associates with the mitochondrial ribosomes.

Its subcellular location is the mitochondrion inner membrane. In terms of biological role, involved in mitochondrial potassium homeostasis through the mitochondrial K(+)/H(+) exchange regulation. This Saccharomyces cerevisiae (strain ATCC 204508 / S288c) (Baker's yeast) protein is LETM1 domain-containing protein YLH47, mitochondrial (YLH47).